We begin with the raw amino-acid sequence, 205 residues long: dITP/XTP pyrophosphatase (205 aa).

11 to 16 (TKNMGK) provides a ligand contact to substrate. Positions 44 and 73 each coordinate Mg(2+). The Proton acceptor role is filled by Asp-73. Residues Ser-74, 158–161 (FGYD), Lys-181, and 186–187 (HR) each bind substrate.

Belongs to the HAM1 NTPase family. Homodimer. Mg(2+) serves as cofactor.

It carries out the reaction XTP + H2O = XMP + diphosphate + H(+). The enzyme catalyses dITP + H2O = dIMP + diphosphate + H(+). The catalysed reaction is ITP + H2O = IMP + diphosphate + H(+). Functionally, pyrophosphatase that catalyzes the hydrolysis of nucleoside triphosphates to their monophosphate derivatives, with a high preference for the non-canonical purine nucleotides XTP (xanthosine triphosphate), dITP (deoxyinosine triphosphate) and ITP. Seems to function as a house-cleaning enzyme that removes non-canonical purine nucleotides from the nucleotide pool, thus preventing their incorporation into DNA/RNA and avoiding chromosomal lesions. This is dITP/XTP pyrophosphatase from Bacillus cereus (strain ATCC 14579 / DSM 31 / CCUG 7414 / JCM 2152 / NBRC 15305 / NCIMB 9373 / NCTC 2599 / NRRL B-3711).